The primary structure comprises 102 residues: Cytochrome c-553 (102 aa).

The first 23 residues, 1–23 (MKRILVVMSICAALAFGVSAAMA), serve as a signal peptide directing secretion. Residues Cys-33, Cys-36, His-37, and Met-80 each contribute to the heme c site.

Post-translationally, binds 1 heme c group covalently per subunit.

It is found in the periplasm. Functionally, natural electron acceptor for a formate dehydrogenase. The protein is Cytochrome c-553 of Nitratidesulfovibrio vulgaris (strain DSM 19637 / Miyazaki F) (Desulfovibrio vulgaris).